The primary structure comprises 103 residues: Pyrimidine/purine nucleoside phosphorylase (103 aa).

It belongs to the nucleoside phosphorylase PpnP family.

It carries out the reaction a purine D-ribonucleoside + phosphate = a purine nucleobase + alpha-D-ribose 1-phosphate. The enzyme catalyses adenosine + phosphate = alpha-D-ribose 1-phosphate + adenine. The catalysed reaction is cytidine + phosphate = cytosine + alpha-D-ribose 1-phosphate. It catalyses the reaction guanosine + phosphate = alpha-D-ribose 1-phosphate + guanine. It carries out the reaction inosine + phosphate = alpha-D-ribose 1-phosphate + hypoxanthine. The enzyme catalyses thymidine + phosphate = 2-deoxy-alpha-D-ribose 1-phosphate + thymine. The catalysed reaction is uridine + phosphate = alpha-D-ribose 1-phosphate + uracil. It catalyses the reaction xanthosine + phosphate = alpha-D-ribose 1-phosphate + xanthine. Catalyzes the phosphorolysis of diverse nucleosides, yielding D-ribose 1-phosphate and the respective free bases. Can use uridine, adenosine, guanosine, cytidine, thymidine, inosine and xanthosine as substrates. Also catalyzes the reverse reactions. The protein is Pyrimidine/purine nucleoside phosphorylase of Shewanella baltica (strain OS223).